Reading from the N-terminus, the 710-residue chain is Fatty acid oxidation complex subunit alpha (710 aa).

Positions 1-190 are enoyl-CoA hydratase; the sequence is MSMEKTFNLA…KMGLVNDVVP (190 aa). Residues 310-710 are 3-hydroxyacyl-CoA dehydrogenase; sequence RKVKKVMVLG…ASDGSQFYKK (401 aa).

This sequence in the N-terminal section; belongs to the enoyl-CoA hydratase/isomerase family. It in the central section; belongs to the 3-hydroxyacyl-CoA dehydrogenase family. Heterotetramer of two alpha chains (FadJ) and two beta chains (FadI).

The protein localises to the cytoplasm. The catalysed reaction is a (3S)-3-hydroxyacyl-CoA = a (2E)-enoyl-CoA + H2O. It catalyses the reaction a 4-saturated-(3S)-3-hydroxyacyl-CoA = a (3E)-enoyl-CoA + H2O. The enzyme catalyses a (3S)-3-hydroxyacyl-CoA + NAD(+) = a 3-oxoacyl-CoA + NADH + H(+). It carries out the reaction (3S)-3-hydroxybutanoyl-CoA = (3R)-3-hydroxybutanoyl-CoA. Its pathway is lipid metabolism; fatty acid beta-oxidation. Catalyzes the formation of a hydroxyacyl-CoA by addition of water on enoyl-CoA. Also exhibits 3-hydroxyacyl-CoA epimerase and 3-hydroxyacyl-CoA dehydrogenase activities. In Shewanella frigidimarina (strain NCIMB 400), this protein is Fatty acid oxidation complex subunit alpha.